The primary structure comprises 361 residues: Probable lipid desaturase ADS3.2, chloroplastic (361 aa).

The N-terminal 57 residues, 1–57 (MMSLSTTLKPLSHFSPFVKRHNPKTNNTLFTLDTHNFTNSFWSKRGGSVSHRKHTVV), are a transit peptide targeting the chloroplast. A run of 2 helical transmembrane segments spans residues 99 to 118 (LVIF…YFSW) and 122 to 139 (WVFP…TLSY). The Histidine box-1 signature appears at 140-145 (HRNLSH). The Histidine box-2 motif lies at 177 to 181 (HRYHH). A helical membrane pass occupies residues 246-266 (FLFYFCGGMPLLVWGIGITIA). The Histidine box-3 signature appears at 309–313 (HNNHH).

It belongs to the fatty acid desaturase type 1 family. It depends on Fe(2+) as a cofactor.

The protein resides in the plastid. It localises to the chloroplast membrane. It functions in the pathway lipid metabolism; polyunsaturated fatty acid biosynthesis. The polypeptide is Probable lipid desaturase ADS3.2, chloroplastic (Arabidopsis thaliana (Mouse-ear cress)).